A 780-amino-acid chain; its full sequence is Acetyl-CoA decarbonylase/synthase complex subunit alpha (780 aa).

The [4Fe-4S] cluster site is built by C73, C76, C77, C79, C84, and C93. H116 is a CO binding site. Residues H250, C278, and C317 each coordinate [Ni-4Fe-4S] cluster. 4Fe-4S ferredoxin-type domains are found at residues 399–429 (IDEIIELASECTDCGWCQRVCPNSLPVMDAV) and 440–469 (LEEMAIEELCYTCGRCEQECERNIPIVSMV). [4Fe-4S] cluster-binding residues include C409, C412, C415, C419, C449, C452, C455, and C459. Positions 517, 546, and 581 each coordinate [Ni-4Fe-4S] cluster.

This sequence belongs to the Ni-containing carbon monoxide dehydrogenase family. In terms of assembly, heterotetramer of two alpha and two epsilon subunits. The ACDS complex is made up of alpha, epsilon, beta, gamma and delta subunits with a probable stoichiometry of (alpha(2)epsilon(2))(4)-beta(8)-(gamma(1)delta(1))(8). Requires [4Fe-4S] cluster as cofactor. [Ni-4Fe-4S] cluster serves as cofactor.

It catalyses the reaction CO + 2 oxidized [2Fe-2S]-[ferredoxin] + H2O = 2 reduced [2Fe-2S]-[ferredoxin] + CO2 + 2 H(+). Part of the ACDS complex that catalyzes the reversible cleavage of acetyl-CoA, allowing autotrophic growth from CO(2). The alpha-epsilon subcomponent functions as a carbon monoxide dehydrogenase. The protein is Acetyl-CoA decarbonylase/synthase complex subunit alpha of Methanothermobacter thermautotrophicus (strain ATCC 29096 / DSM 1053 / JCM 10044 / NBRC 100330 / Delta H) (Methanobacterium thermoautotrophicum).